The following is a 260-amino-acid chain: NADH-ubiquinone oxidoreductase chain 6 (260 aa).

6 helical membrane passes run 2–22 (LTNY…FMII), 30–50 (SILY…ILGV), 52–72 (FIAI…FLFV), 101–121 (FLFQ…FGLF), 142–162 (VPSG…NLGI), and 211–231 (FFIF…SIIL).

Belongs to the complex I subunit 6 family.

The protein localises to the mitochondrion membrane. It catalyses the reaction a ubiquinone + NADH + 5 H(+)(in) = a ubiquinol + NAD(+) + 4 H(+)(out). Core subunit of the mitochondrial membrane respiratory chain NADH dehydrogenase (Complex I) that is believed to belong to the minimal assembly required for catalysis. Complex I functions in the transfer of electrons from NADH to the respiratory chain. The immediate electron acceptor for the enzyme is believed to be ubiquinone. The polypeptide is NADH-ubiquinone oxidoreductase chain 6 (ND6) (Acanthamoeba castellanii (Amoeba)).